Consider the following 359-residue polypeptide: Peptide chain release factor 1 (359 aa).

An N5-methylglutamine modification is found at glutamine 235. The tract at residues 285 to 305 (KRDSEISQMRKSQIGSGDRSE) is disordered. A compositionally biased stretch (polar residues) spans 290-299 (ISQMRKSQIG).

The protein belongs to the prokaryotic/mitochondrial release factor family. Methylated by PrmC. Methylation increases the termination efficiency of RF1.

It localises to the cytoplasm. Functionally, peptide chain release factor 1 directs the termination of translation in response to the peptide chain termination codons UAG and UAA. The polypeptide is Peptide chain release factor 1 (Ehrlichia canis (strain Jake)).